The chain runs to 288 residues: Thymidylate synthase (288 aa).

DUMP-binding positions include Arg21 and 150–151 (RR). Cys170 (nucleophile) is an active-site residue. Residues 190–193 (RSGD), Asn201, and 231–233 (HIY) each bind dUMP. Position 193 (Asp193) interacts with (6R)-5,10-methylene-5,6,7,8-tetrahydrofolate. Ala287 provides a ligand contact to (6R)-5,10-methylene-5,6,7,8-tetrahydrofolate.

Belongs to the thymidylate synthase family. Bacterial-type ThyA subfamily. In terms of assembly, homodimer.

Its subcellular location is the cytoplasm. The catalysed reaction is dUMP + (6R)-5,10-methylene-5,6,7,8-tetrahydrofolate = 7,8-dihydrofolate + dTMP. It functions in the pathway pyrimidine metabolism; dTTP biosynthesis. Its function is as follows. Catalyzes the reductive methylation of 2'-deoxyuridine-5'-monophosphate (dUMP) to 2'-deoxythymidine-5'-monophosphate (dTMP) while utilizing 5,10-methylenetetrahydrofolate (mTHF) as the methyl donor and reductant in the reaction, yielding dihydrofolate (DHF) as a by-product. This enzymatic reaction provides an intracellular de novo source of dTMP, an essential precursor for DNA biosynthesis. This chain is Thymidylate synthase, found in Acholeplasma laidlawii (strain PG-8A).